The following is a 104-amino-acid chain: L-rhamnose mutarotase (104 aa).

A substrate-binding site is contributed by Tyr18. His22 acts as the Proton donor in catalysis. Substrate contacts are provided by residues Tyr41 and 76 to 77; that span reads WW.

This sequence belongs to the rhamnose mutarotase family. In terms of assembly, homodimer.

It localises to the cytoplasm. It catalyses the reaction alpha-L-rhamnose = beta-L-rhamnose. It participates in carbohydrate metabolism; L-rhamnose metabolism. Its function is as follows. Involved in the anomeric conversion of L-rhamnose. The polypeptide is L-rhamnose mutarotase (Salmonella dublin (strain CT_02021853)).